Reading from the N-terminus, the 272-residue chain is HMP-PP phosphatase (272 aa).

Asp-8 (nucleophile) is an active-site residue. Asp-8, Asp-10, and Asp-212 together coordinate Mg(2+).

The protein belongs to the HAD-like hydrolase superfamily. Cof family. It depends on Mg(2+) as a cofactor.

It catalyses the reaction 4-amino-2-methyl-5-(diphosphooxymethyl)pyrimidine + H2O = 4-amino-2-methyl-5-(phosphooxymethyl)pyrimidine + phosphate + H(+). Its function is as follows. Catalyzes the hydrolysis of 4-amino-2-methyl-5-hydroxymethylpyrimidine pyrophosphate (HMP-PP) to 4-amino-2-methyl-5-hydroxymethylpyrimidine phosphate (HMP-P). This chain is HMP-PP phosphatase, found in Shigella flexneri serotype 5b (strain 8401).